The chain runs to 120 residues: Large ribosomal subunit protein uL18 (120 aa).

It belongs to the universal ribosomal protein uL18 family. As to quaternary structure, part of the 50S ribosomal subunit; part of the 5S rRNA/L5/L18/L25 subcomplex. Contacts the 5S and 23S rRNAs.

This is one of the proteins that bind and probably mediate the attachment of the 5S RNA into the large ribosomal subunit, where it forms part of the central protuberance. This Rhizobium johnstonii (strain DSM 114642 / LMG 32736 / 3841) (Rhizobium leguminosarum bv. viciae) protein is Large ribosomal subunit protein uL18.